A 177-amino-acid chain; its full sequence is Translation initiation factor IF-3 (177 aa).

Belongs to the IF-3 family. In terms of assembly, monomer.

The protein resides in the cytoplasm. Its function is as follows. IF-3 binds to the 30S ribosomal subunit and shifts the equilibrium between 70S ribosomes and their 50S and 30S subunits in favor of the free subunits, thus enhancing the availability of 30S subunits on which protein synthesis initiation begins. The chain is Translation initiation factor IF-3 from Nostoc punctiforme (strain ATCC 29133 / PCC 73102).